A 582-amino-acid polypeptide reads, in one-letter code: Trans-activating transcriptional regulatory protein (582 aa).

Positions 101 to 131 (QPVVEQPSPSSAYHAESFEHSAGVNQPSATG) are disordered.

It belongs to the nucleopolyhedrovirus IE-1 protein family. As to quaternary structure, homodimer. Interacts with helicase and LEF-3. Phosphorylated.

Its subcellular location is the host nucleus. In terms of biological role, regulatory transcriptional protein, which trans-activates gene expression from early baculovirus promoters. Can also trans-activate its own promoter, suggesting an autoregulation during infection of host cells. Also promotes viral DNA genome replication via the N-terminal region. The polypeptide is Trans-activating transcriptional regulatory protein (IE1) (Autographa californica nuclear polyhedrosis virus (AcMNPV)).